Here is a 49-residue protein sequence, read N- to C-terminus: Large ribosomal subunit protein bL33 (49 aa).

Belongs to the bacterial ribosomal protein bL33 family.

In Lactiplantibacillus plantarum (strain ATCC BAA-793 / NCIMB 8826 / WCFS1) (Lactobacillus plantarum), this protein is Large ribosomal subunit protein bL33.